We begin with the raw amino-acid sequence, 390 residues long: Galactokinase (390 aa).

Residue 33 to 36 coordinates substrate; it reads EHTD. ATP contacts are provided by residues serine 67 and 124 to 130; that span reads GAGLSSS. Mg(2+) is bound by residues serine 130 and glutamate 162. The active-site Proton acceptor is the aspartate 174. Tyrosine 224 contributes to the substrate binding site.

The protein belongs to the GHMP kinase family. GalK subfamily.

Its subcellular location is the cytoplasm. It carries out the reaction alpha-D-galactose + ATP = alpha-D-galactose 1-phosphate + ADP + H(+). Its pathway is carbohydrate metabolism; galactose metabolism. Catalyzes the transfer of the gamma-phosphate of ATP to D-galactose to form alpha-D-galactose-1-phosphate (Gal-1-P). The polypeptide is Galactokinase (Exiguobacterium sibiricum (strain DSM 17290 / CCUG 55495 / CIP 109462 / JCM 13490 / 255-15)).